Consider the following 250-residue polypeptide: MPRYKLVIEYDGAPFRGWQRQADDPTVQAAIETAVTRFSGETARLTCAGRTDAGVHAIHQVAHLDLAKDWRTDTVRDALNAHLRPQPVSILSAEVVPQEFDARHSAIRRHYRYRILNRRSPAALTRAHVWQVPWPLDAELMHRAAQRLLGHHDFSAFRAAECQAKSPMRTLEQLDVTRERMGLFEEIVIATSARSFLHHQVRAMAGTLMLAGCKRLSADDVAEILATGAKHRCGPLAPACGLTFVGVDYL.

The active-site Nucleophile is the aspartate 52. Substrate is bound at residue tyrosine 111.

Belongs to the tRNA pseudouridine synthase TruA family. Homodimer.

The enzyme catalyses uridine(38/39/40) in tRNA = pseudouridine(38/39/40) in tRNA. Its function is as follows. Formation of pseudouridine at positions 38, 39 and 40 in the anticodon stem and loop of transfer RNAs. This chain is tRNA pseudouridine synthase A, found in Methylorubrum extorquens (strain CM4 / NCIMB 13688) (Methylobacterium extorquens).